The chain runs to 223 residues: Phosphoribosylformylglycinamidine synthase subunit PurQ (223 aa).

Residues 2-223 form the Glutamine amidotransferase type-1 domain; it reads KTAIIQLPGL…FQSALELAKG (222 aa). Cysteine 86 acts as the Nucleophile in catalysis. Active-site residues include histidine 196 and glutamate 198.

Part of the FGAM synthase complex composed of 1 PurL, 1 PurQ and 2 PurS subunits.

The protein localises to the cytoplasm. The enzyme catalyses N(2)-formyl-N(1)-(5-phospho-beta-D-ribosyl)glycinamide + L-glutamine + ATP + H2O = 2-formamido-N(1)-(5-O-phospho-beta-D-ribosyl)acetamidine + L-glutamate + ADP + phosphate + H(+). It catalyses the reaction L-glutamine + H2O = L-glutamate + NH4(+). The protein operates within purine metabolism; IMP biosynthesis via de novo pathway; 5-amino-1-(5-phospho-D-ribosyl)imidazole from N(2)-formyl-N(1)-(5-phospho-D-ribosyl)glycinamide: step 1/2. Functionally, part of the phosphoribosylformylglycinamidine synthase complex involved in the purines biosynthetic pathway. Catalyzes the ATP-dependent conversion of formylglycinamide ribonucleotide (FGAR) and glutamine to yield formylglycinamidine ribonucleotide (FGAM) and glutamate. The FGAM synthase complex is composed of three subunits. PurQ produces an ammonia molecule by converting glutamine to glutamate. PurL transfers the ammonia molecule to FGAR to form FGAM in an ATP-dependent manner. PurS interacts with PurQ and PurL and is thought to assist in the transfer of the ammonia molecule from PurQ to PurL. The sequence is that of Phosphoribosylformylglycinamidine synthase subunit PurQ from Bartonella henselae (strain ATCC 49882 / DSM 28221 / CCUG 30454 / Houston 1) (Rochalimaea henselae).